The sequence spans 678 residues: Protein mono-ADP-ribosyltransferase PARP15 (678 aa).

Low complexity predominate over residues 1–19 (MAAPGPLPAAALSPGAPTP). Positions 1-67 (MAAPGPLPAA…SSRSMSRDNK (67 aa)) are disordered. A compositionally biased stretch (basic residues) spans 49–58 (GARKASRRSS). Macro domains are found at residues 78–267 (NVVA…TNWS) and 293–464 (CFTA…KKRD). Residues 312-313 (DI), 324-325 (ST), arginine 331, valine 335, 409-413 (GTGNA), and glutamine 449 each bind substrate. The 197-residue stretch at 482–678 (LPEHWTDMNH…YPEYLITFTA (197 aa)) folds into the PARP catalytic domain.

This sequence belongs to the ARTD/PARP family.

It is found in the nucleus. The enzyme catalyses L-aspartyl-[protein] + NAD(+) = 4-O-(ADP-D-ribosyl)-L-aspartyl-[protein] + nicotinamide. It carries out the reaction L-glutamyl-[protein] + NAD(+) = 5-O-(ADP-D-ribosyl)-L-glutamyl-[protein] + nicotinamide. Its function is as follows. Mono-ADP-ribosyltransferase that mediates mono-ADP-ribosylation of target proteins. Acts as a negative regulator of transcription. This chain is Protein mono-ADP-ribosyltransferase PARP15, found in Homo sapiens (Human).